The sequence spans 149 residues: uncharacterized protein (149 aa).

Positions 2-146 (LEVKTISVED…NHIVMYKTLR (145 aa)) constitute an N-acetyltransferase domain.

Belongs to the acetyltransferase family.

This is an uncharacterized protein from Bacillus subtilis (strain 168).